Here is a 245-residue protein sequence, read N- to C-terminus: 1-(5-phosphoribosyl)-5-[(5-phosphoribosylamino)methylideneamino] imidazole-4-carboxamide isomerase (245 aa).

Residue D8 is the Proton acceptor of the active site. The Proton donor role is filled by D129.

It belongs to the HisA/HisF family.

The protein resides in the cytoplasm. It catalyses the reaction 1-(5-phospho-beta-D-ribosyl)-5-[(5-phospho-beta-D-ribosylamino)methylideneamino]imidazole-4-carboxamide = 5-[(5-phospho-1-deoxy-D-ribulos-1-ylimino)methylamino]-1-(5-phospho-beta-D-ribosyl)imidazole-4-carboxamide. It participates in amino-acid biosynthesis; L-histidine biosynthesis; L-histidine from 5-phospho-alpha-D-ribose 1-diphosphate: step 4/9. This is 1-(5-phosphoribosyl)-5-[(5-phosphoribosylamino)methylideneamino] imidazole-4-carboxamide isomerase from Rhodopseudomonas palustris (strain BisB5).